The following is a 218-amino-acid chain: Pyridoxine/pyridoxamine 5'-phosphate oxidase (218 aa).

Substrate-binding positions include 14–17 (RREY) and Lys-72. Residues 67-72 (RIVLLK), 82-83 (YT), Arg-88, Lys-89, and Gln-111 contribute to the FMN site. Substrate contacts are provided by Tyr-129, Arg-133, and Ser-137. FMN is bound by residues 146 to 147 (QS) and Trp-191. 197–199 (RLH) contributes to the substrate binding site. Arg-201 contributes to the FMN binding site.

It belongs to the pyridoxamine 5'-phosphate oxidase family. As to quaternary structure, homodimer. It depends on FMN as a cofactor.

It catalyses the reaction pyridoxamine 5'-phosphate + O2 + H2O = pyridoxal 5'-phosphate + H2O2 + NH4(+). It carries out the reaction pyridoxine 5'-phosphate + O2 = pyridoxal 5'-phosphate + H2O2. Its pathway is cofactor metabolism; pyridoxal 5'-phosphate salvage; pyridoxal 5'-phosphate from pyridoxamine 5'-phosphate: step 1/1. It participates in cofactor metabolism; pyridoxal 5'-phosphate salvage; pyridoxal 5'-phosphate from pyridoxine 5'-phosphate: step 1/1. Catalyzes the oxidation of either pyridoxine 5'-phosphate (PNP) or pyridoxamine 5'-phosphate (PMP) into pyridoxal 5'-phosphate (PLP). This is Pyridoxine/pyridoxamine 5'-phosphate oxidase from Escherichia coli O45:K1 (strain S88 / ExPEC).